The chain runs to 190 residues: Dynactin subunit 6 (190 aa).

Position 186 is a phosphothreonine; by CDK1 (Thr186).

The protein belongs to the dynactin subunits 5/6 family. Dynactin subunit 6 subfamily. Subunit of dynactin, a multiprotein complex part of a tripartite complex with dynein and a adapter, such as BICDL1, BICD2 or HOOK3. The dynactin complex is built around ACTR1A/ACTB filament and consists of an actin-related filament composed of a shoulder domain, a pointed end and a barbed end. Its length is defined by its flexible shoulder domain. The soulder is composed of 2 DCTN1 subunits, 4 DCTN2 and 2 DCTN3. The 4 DCNT2 (via N-terminus) bind the ACTR1A filament and act as molecular rulers to determine the length. The pointed end is important for binding dynein-dynactin cargo adapters. Consists of 4 subunits: ACTR10, DCNT4, DCTN5 and DCTN6. Within the complex DCTN6 forms a heterodimer with DCTN5. The barbed end is composed of a CAPZA1:CAPZB heterodimers, which binds ACTR1A/ACTB filament and dynactin and stabilizes dynactin. Interacts with PLK1. Interacts with N4BP2L1. In terms of processing, phosphorylation at Thr-186 by CDK1 during mitotic prometaphase creates a binding site for PLK1 that facilitates its recruitment to kinetochores. Ubiquitous.

The protein localises to the cytoplasm. It localises to the cytoskeleton. The protein resides in the chromosome. It is found in the centromere. Its subcellular location is the kinetochore. Part of the dynactin complex that activates the molecular motor dynein for ultra-processive transport along microtubules. This is Dynactin subunit 6 from Homo sapiens (Human).